The chain runs to 320 residues: Phosphoribosylaminoimidazole-succinocarboxamide synthase (320 aa).

The segment at 283–303 (ESDWDRNSPPPPLPESIAHQT) is disordered.

This sequence belongs to the SAICAR synthetase family.

The catalysed reaction is 5-amino-1-(5-phospho-D-ribosyl)imidazole-4-carboxylate + L-aspartate + ATP = (2S)-2-[5-amino-1-(5-phospho-beta-D-ribosyl)imidazole-4-carboxamido]succinate + ADP + phosphate + 2 H(+). The protein operates within purine metabolism; IMP biosynthesis via de novo pathway; 5-amino-1-(5-phospho-D-ribosyl)imidazole-4-carboxamide from 5-amino-1-(5-phospho-D-ribosyl)imidazole-4-carboxylate: step 1/2. The protein is Phosphoribosylaminoimidazole-succinocarboxamide synthase of Rhodopirellula baltica (strain DSM 10527 / NCIMB 13988 / SH1).